The primary structure comprises 130 residues: Protein ApaG (130 aa).

Positions 3-127 constitute an ApaG domain; the sequence is RAITRNIQVT…FSLDVPDVRR (125 aa).

In Xanthobacter autotrophicus (strain ATCC BAA-1158 / Py2), this protein is Protein ApaG.